Consider the following 93-residue polypeptide: Small integral membrane protein 41 (93 aa).

A helical membrane pass occupies residues 38–58; sequence VVLGVLSLLVLCGVLFLGGGL. A compositionally biased stretch (basic and acidic residues) spans 71 to 80; that stretch reads REQRASREPE. The disordered stretch occupies residues 71 to 93; sequence REQRASREPEPGSASGEDGDDDS.

It localises to the membrane. The polypeptide is Small integral membrane protein 41 (Homo sapiens (Human)).